Here is a 389-residue protein sequence, read N- to C-terminus: S-adenosylmethionine synthase (389 aa).

H17 contacts ATP. D19 is a Mg(2+) binding site. E45 provides a ligand contact to K(+). Residues E58 and Q101 each coordinate L-methionine. The tract at residues 101–111 is flexible loop; sequence QSPDISQGVTE. ATP contacts are provided by residues 168 to 170, 234 to 235, D243, 249 to 250, A266, and K270; these read DSK, RF, and RK. Residue D243 coordinates L-methionine. K274 contacts L-methionine.

The protein belongs to the AdoMet synthase family. In terms of assembly, homotetramer; dimer of dimers. The cofactor is Mg(2+). It depends on K(+) as a cofactor.

It localises to the cytoplasm. It catalyses the reaction L-methionine + ATP + H2O = S-adenosyl-L-methionine + phosphate + diphosphate. Its pathway is amino-acid biosynthesis; S-adenosyl-L-methionine biosynthesis; S-adenosyl-L-methionine from L-methionine: step 1/1. In terms of biological role, catalyzes the formation of S-adenosylmethionine (AdoMet) from methionine and ATP. The overall synthetic reaction is composed of two sequential steps, AdoMet formation and the subsequent tripolyphosphate hydrolysis which occurs prior to release of AdoMet from the enzyme. In Geobacter metallireducens (strain ATCC 53774 / DSM 7210 / GS-15), this protein is S-adenosylmethionine synthase.